The sequence spans 119 residues: Large ribosomal subunit protein bL20 (119 aa).

It belongs to the bacterial ribosomal protein bL20 family.

Its function is as follows. Binds directly to 23S ribosomal RNA and is necessary for the in vitro assembly process of the 50S ribosomal subunit. It is not involved in the protein synthesizing functions of that subunit. In Alkaliphilus metalliredigens (strain QYMF), this protein is Large ribosomal subunit protein bL20.